We begin with the raw amino-acid sequence, 123 residues long: Phosphoribosyl-AMP cyclohydrolase (123 aa).

Residue D81 participates in Mg(2+) binding. C82 serves as a coordination point for Zn(2+). The Mg(2+) site is built by D83 and D85. Residues C98 and C105 each contribute to the Zn(2+) site.

Belongs to the PRA-CH family. Homodimer. Mg(2+) serves as cofactor. Zn(2+) is required as a cofactor.

It localises to the cytoplasm. It catalyses the reaction 1-(5-phospho-beta-D-ribosyl)-5'-AMP + H2O = 1-(5-phospho-beta-D-ribosyl)-5-[(5-phospho-beta-D-ribosylamino)methylideneamino]imidazole-4-carboxamide. It functions in the pathway amino-acid biosynthesis; L-histidine biosynthesis; L-histidine from 5-phospho-alpha-D-ribose 1-diphosphate: step 3/9. In terms of biological role, catalyzes the hydrolysis of the adenine ring of phosphoribosyl-AMP. The protein is Phosphoribosyl-AMP cyclohydrolase of Nocardioides sp. (strain ATCC BAA-499 / JS614).